Consider the following 512-residue polypeptide: Lysine--tRNA ligase (512 aa).

Mg(2+) contacts are provided by E408 and E415.

It belongs to the class-II aminoacyl-tRNA synthetase family. As to quaternary structure, homodimer. It depends on Mg(2+) as a cofactor.

Its subcellular location is the cytoplasm. The catalysed reaction is tRNA(Lys) + L-lysine + ATP = L-lysyl-tRNA(Lys) + AMP + diphosphate. This chain is Lysine--tRNA ligase, found in Prochlorococcus marinus (strain MIT 9301).